Reading from the N-terminus, the 156-residue chain is Small ribosomal subunit protein uS7 (156 aa).

The protein belongs to the universal ribosomal protein uS7 family. Part of the 30S ribosomal subunit. Contacts proteins S9 and S11.

Functionally, one of the primary rRNA binding proteins, it binds directly to 16S rRNA where it nucleates assembly of the head domain of the 30S subunit. Is located at the subunit interface close to the decoding center, probably blocks exit of the E-site tRNA. This is Small ribosomal subunit protein uS7 from Agrobacterium fabrum (strain C58 / ATCC 33970) (Agrobacterium tumefaciens (strain C58)).